A 486-amino-acid chain; its full sequence is Hematopoietic lineage cell-specific protein (486 aa).

The segment at 27–66 (FVNDISEKEQRWGAKTIEGSGRTEHINIHQLRNKVSEEHD) is involved in HAX-1 binding. An N6-acetyllysine modification is found at lysine 41. Cortactin repeat units follow at residues 79-115 (ASHGYGGRFGVERDRMDKSAVGHEYVADVEKHSSQTD), 116-152 (AARGFGGKYGVERDRADKSAVGFDYKGEVEKHASQKD), and 153-189 (YSHGFGGRYGVEKDKRDKAALGYDYKGETEKHESQRD). An N6-acetyllysine modification is found at lysine 123. At tyrosine 140 the chain carries Phosphotyrosine. The stretch at 190-212 (YAKGFGGQYGIQKDRVDKSAVGF) is one Cortactin 4; truncated repeat. The residue at position 192 (lysine 192) is an N6-acetyllysine. Tyrosine 198 carries the phosphotyrosine modification. Tyrosine 222 carries the post-translational modification Phosphotyrosine; by FGR. The disordered stretch occupies residues 226-430 (TPIEAASSGA…AGPSAGAGGA (205 aa)). Basic and acidic residues-rich tracts occupy residues 240 to 258 (AKFESLAEEKRKREEEEKA) and 265 to 276 (QQERKAVVKMSR). Position 241 is an N6-acetyllysine (lysine 241). At serine 275 the chain carries Phosphoserine. At threonine 330 the chain carries Phosphothreonine. At serine 333 the chain carries Phosphoserine. The segment covering 358–367 (VVEEPVYEAA) has biased composition (low complexity). Positions 368 to 413 (PELEPEPEPDYEPEPETEPDYEDVGELDRQDEDAEGDYEDVLEPED) are enriched in acidic residues. 2 positions are modified to phosphotyrosine; by SYK and FES: tyrosine 388 and tyrosine 405. Residues 429 to 486 (GAGISAIALYDYQGEGSDELSFDPDDIITDIEMVDEGWWRGQCRGHFGLFPANYVKLL) enclose the SH3 domain.

As to quaternary structure, interacts (via SH2 domain) with FGR. Associates with the SH2 and SH3 domains of LCK. Binding to he LCK SH3 domain occurs constitutively, while binding to the LCK SH2 domain occurs only upon TCR stimulation. A similar binding pattern was observed with LYN, but not with FYN in which the FYN SH2 region associates upon TCR stimulation but the FYN SH3 region does not associate regardless of TCR stimulation. Directly associates with HAX1, through binding to its C-terminal region. Interacts with HS1BP3. Interacts with FES/FPS. Forms a multiprotein complex with LYN and ANKRD54. Phosphorylated by LYN, FYN and FGR after cross-linking of surface IgM on B-cells. Phosphorylation by LYN, FYN and FGR requires prior phosphorylation by SYK. Binds to LCK in vivo, and is tyrosine phosphorylated upon TCR stimulation. Phosphorylated by FES. Expressed only in tissues and cells of hematopoietic origin.

It is found in the mitochondrion. Functionally, substrate of the antigen receptor-coupled tyrosine kinase. Plays a role in antigen receptor signaling for both clonal expansion and deletion in lymphoid cells. May also be involved in the regulation of gene expression. This Mus musculus (Mouse) protein is Hematopoietic lineage cell-specific protein (Hcls1).